Here is a 312-residue protein sequence, read N- to C-terminus: Peptide methionine sulfoxide reductase MsrA/MsrB 1 (312 aa).

The peptide methionine sulfoxide reductase stretch occupies residues 1 to 155 (MAEIYLAGGC…PSGYCHIDVT (155 aa)). Cys-10 is an active-site residue. One can recognise a MsrB domain in the interval 172–295 (QEVLKASLSE…NSASLRFVAK (124 aa)). Cys-284 (nucleophile) is an active-site residue.

The protein in the N-terminal section; belongs to the MsrA Met sulfoxide reductase family. It in the C-terminal section; belongs to the MsrB Met sulfoxide reductase family.

It localises to the cell membrane. It catalyses the reaction L-methionyl-[protein] + [thioredoxin]-disulfide + H2O = L-methionyl-(S)-S-oxide-[protein] + [thioredoxin]-dithiol. The enzyme catalyses [thioredoxin]-disulfide + L-methionine + H2O = L-methionine (S)-S-oxide + [thioredoxin]-dithiol. The catalysed reaction is L-methionyl-[protein] + [thioredoxin]-disulfide + H2O = L-methionyl-(R)-S-oxide-[protein] + [thioredoxin]-dithiol. Has an important function as a repair enzyme for proteins that have been inactivated by oxidation. Catalyzes the reversible oxidation-reduction of methionine sulfoxide in proteins to methionine. The chain is Peptide methionine sulfoxide reductase MsrA/MsrB 1 (msrAB1) from Streptococcus pneumoniae serotype 4 (strain ATCC BAA-334 / TIGR4).